We begin with the raw amino-acid sequence, 518 residues long: MLTFDNRFLRELPGDPETSNQLRQVYGACWSRVMPTSVSSPKLLAYSHEMLEALELSEEEIRSPAWVDALAGNGLMPGMEPYAACYGGHQFGHWAGQLGDGRAISLGEVVNRQGQRWELQLKGAGVTPYSRMADGRAVLRSSVREFLCSEAMHHLGIPTTRALSLVQTGDVVIRDMFYDGHPQAEKGAIVCRVSPSFIRFGNFEIFAMRDDKQTLQKLVDFTIDRDFPELRNYPEEERLAEWFAIICVRTARLIAQWMRVGFVHGVMNTDNMSILGLTIDYGPYGWVDNFDPGWTPNTTDAAGRRYCFGRQPDIARWNLERLAQALYTLKPEREIYDEGLMLYDQAYNNEWGAVLAAKFGFSAWRDEYEPLLNEVFGLMTQAEIDMTEFFRKLALVDAAQPDLGILQSAAYSPALWETFKPRFSDWLGQYAQATLADGRDPAERREAMNRVNPRYVLRNYLAQQAIDLADTGDTSMIEALMDVLRKPYDEQPGKERFAALRPDWARHKAGCSMLSCSS.

The ATP site is built by Gly-99, Gly-101, Arg-102, Lys-122, Asp-134, Gly-135, Arg-192, and Arg-199. Asp-270 serves as the catalytic Proton acceptor. Residues Asn-271 and Asp-280 each coordinate Mg(2+). An ATP-binding site is contributed by Asp-280.

This sequence belongs to the SELO family. The cofactor is Mg(2+). Mn(2+) serves as cofactor.

It catalyses the reaction L-seryl-[protein] + ATP = 3-O-(5'-adenylyl)-L-seryl-[protein] + diphosphate. It carries out the reaction L-threonyl-[protein] + ATP = 3-O-(5'-adenylyl)-L-threonyl-[protein] + diphosphate. The catalysed reaction is L-tyrosyl-[protein] + ATP = O-(5'-adenylyl)-L-tyrosyl-[protein] + diphosphate. The enzyme catalyses L-histidyl-[protein] + UTP = N(tele)-(5'-uridylyl)-L-histidyl-[protein] + diphosphate. It catalyses the reaction L-seryl-[protein] + UTP = O-(5'-uridylyl)-L-seryl-[protein] + diphosphate. It carries out the reaction L-tyrosyl-[protein] + UTP = O-(5'-uridylyl)-L-tyrosyl-[protein] + diphosphate. Nucleotidyltransferase involved in the post-translational modification of proteins. It can catalyze the addition of adenosine monophosphate (AMP) or uridine monophosphate (UMP) to a protein, resulting in modifications known as AMPylation and UMPylation. The polypeptide is Protein nucleotidyltransferase YdiU (Methylobacillus flagellatus (strain ATCC 51484 / DSM 6875 / VKM B-1610 / KT)).